The sequence spans 461 residues: Bifunctional protein GlmU (461 aa).

The pyrophosphorylase stretch occupies residues 1–230; the sequence is MECLMAVILA…SSEILGINDR (230 aa). UDP-N-acetyl-alpha-D-glucosamine is bound by residues 9–12, Lys23, Gln73, 78–79, 101–103, Gly140, Glu155, Asn170, and Asn228; these read LAAG, GT, and YGD. Asp103 lines the Mg(2+) pocket. Asn228 contacts Mg(2+). The interval 231–251 is linker; that stretch reads VQLAEAGRIIRSRILKRHMKN. Residues 252 to 461 are N-acetyltransferase; the sequence is GVTIIDPDST…KKGMLRQEKE (210 aa). UDP-N-acetyl-alpha-D-glucosamine contacts are provided by Arg333 and Lys351. His363 (proton acceptor) is an active-site residue. 2 residues coordinate UDP-N-acetyl-alpha-D-glucosamine: Tyr366 and Asn377. Acetyl-CoA contacts are provided by residues 386–387, Ala423, and Arg440; that span reads NY.

In the N-terminal section; belongs to the N-acetylglucosamine-1-phosphate uridyltransferase family. It in the C-terminal section; belongs to the transferase hexapeptide repeat family. As to quaternary structure, homotrimer. Mg(2+) is required as a cofactor.

Its subcellular location is the cytoplasm. The catalysed reaction is alpha-D-glucosamine 1-phosphate + acetyl-CoA = N-acetyl-alpha-D-glucosamine 1-phosphate + CoA + H(+). The enzyme catalyses N-acetyl-alpha-D-glucosamine 1-phosphate + UTP + H(+) = UDP-N-acetyl-alpha-D-glucosamine + diphosphate. Its pathway is nucleotide-sugar biosynthesis; UDP-N-acetyl-alpha-D-glucosamine biosynthesis; N-acetyl-alpha-D-glucosamine 1-phosphate from alpha-D-glucosamine 6-phosphate (route II): step 2/2. It functions in the pathway nucleotide-sugar biosynthesis; UDP-N-acetyl-alpha-D-glucosamine biosynthesis; UDP-N-acetyl-alpha-D-glucosamine from N-acetyl-alpha-D-glucosamine 1-phosphate: step 1/1. The protein operates within bacterial outer membrane biogenesis; LPS lipid A biosynthesis. Catalyzes the last two sequential reactions in the de novo biosynthetic pathway for UDP-N-acetylglucosamine (UDP-GlcNAc). The C-terminal domain catalyzes the transfer of acetyl group from acetyl coenzyme A to glucosamine-1-phosphate (GlcN-1-P) to produce N-acetylglucosamine-1-phosphate (GlcNAc-1-P), which is converted into UDP-GlcNAc by the transfer of uridine 5-monophosphate (from uridine 5-triphosphate), a reaction catalyzed by the N-terminal domain. This Acetivibrio thermocellus (strain ATCC 27405 / DSM 1237 / JCM 9322 / NBRC 103400 / NCIMB 10682 / NRRL B-4536 / VPI 7372) (Clostridium thermocellum) protein is Bifunctional protein GlmU.